The following is a 362-amino-acid chain: Microfibril-associated glycoprotein 3 (362 aa).

The N-terminal stretch at 1–19 is a signal peptide; the sequence is MKLHCCLFTLVASIIVPAA. The Extracellular portion of the chain corresponds to 20-146; the sequence is FVLEDVDFNQ…TLRVIFTSGD (127 aa). 3 N-linked (GlcNAc...) asparagine glycosylation sites follow: N36, N41, and N110. Residues 45 to 137 enclose the Ig-like C2-type domain; the sequence is PSSFELSASS…SPIRASYSVT (93 aa). C73 and C124 are joined by a disulfide. A helical membrane pass occupies residues 147-167; that stretch reads MSVYYMIVCLIAFTITLILNV. At 168–362 the chain is on the cytoplasmic side; that stretch reads TRLCMMSSHL…KDGAYENSQL (195 aa). Disordered regions lie at residues 282-306 and 319-362; these read GIYV…GSLN and HLQS…NSQL. Over residues 319–337 the composition is skewed to polar residues; the sequence is HLQSETKSIDTESQGSSHF.

In terms of processing, glycosylated.

The protein resides in the cell membrane. Component of the elastin-associated microfibrils. The sequence is that of Microfibril-associated glycoprotein 3 (MFAP3) from Pongo abelii (Sumatran orangutan).